Reading from the N-terminus, the 172-residue chain is C-phycocyanin beta chain (172 aa).

Residue N72 is modified to N4-methylasparagine. (2R,3E)-phycocyanobilin is bound by residues C82 and C153.

This sequence belongs to the phycobiliprotein family. In terms of assembly, heterodimer of an alpha and a beta subunit, which further assembles into trimers and the trimers into hexamers. The basic functional unit of phycobiliproteins is a ring-shaped hexamer formed from two back-to-back trimers contacting via the alpha chain subunits. The trimers are composed of alpha/beta subunit heterodimers arranged around a three-fold axis of symmetry. The phycoerythrins also contain a gamma subunit which is located in the center of the hexamer. Contains two covalently linked bilin chromophores.

It is found in the plastid. Its subcellular location is the chloroplast thylakoid membrane. Its function is as follows. Light-harvesting photosynthetic bile pigment-protein from the phycobiliprotein complex (phycobilisome, PBS). Phycocyanin is the major phycobiliprotein in the PBS rod. This is C-phycocyanin beta chain (cpcB) from Pyropia haitanensis (Red seaweed).